A 473-amino-acid chain; its full sequence is Glutamate--tRNA ligase 1 (473 aa).

A 'HIGH' region motif is present at residues 11-21 (PSPTGFLHIGG). Residues 111-132 (REQARKEGRPPRYDGRWRDRAE) are disordered. A 'KMSKS' region motif is present at residues 240–244 (KLSKR). Position 243 (Lys-243) interacts with ATP.

It belongs to the class-I aminoacyl-tRNA synthetase family. Glutamate--tRNA ligase type 1 subfamily. In terms of assembly, monomer.

The protein resides in the cytoplasm. It catalyses the reaction tRNA(Glu) + L-glutamate + ATP = L-glutamyl-tRNA(Glu) + AMP + diphosphate. Functionally, catalyzes the attachment of glutamate to tRNA(Glu) in a two-step reaction: glutamate is first activated by ATP to form Glu-AMP and then transferred to the acceptor end of tRNA(Glu). The sequence is that of Glutamate--tRNA ligase 1 from Beijerinckia indica subsp. indica (strain ATCC 9039 / DSM 1715 / NCIMB 8712).